Reading from the N-terminus, the 232-residue chain is Caffeoyl-CoA O-methyltransferase (232 aa).

Residue Lys6 participates in substrate binding. S-adenosyl-L-methionine contacts are provided by residues Thr48, Glu70, 72–73, Ser78, Asp96, and Ala125; that span reads GV. Residue Asp148 coordinates substrate. Asp148 is an a divalent metal cation binding site. Residue Asp150 participates in S-adenosyl-L-methionine binding. A divalent metal cation contacts are provided by Asp174 and Asn175. A substrate-binding site is contributed by Asn179.

The protein belongs to the class I-like SAM-binding methyltransferase superfamily. Cation-dependent O-methyltransferase family. CCoAMT subfamily. It depends on a divalent metal cation as a cofactor.

It carries out the reaction (E)-caffeoyl-CoA + S-adenosyl-L-methionine = (E)-feruloyl-CoA + S-adenosyl-L-homocysteine + H(+). It participates in aromatic compound metabolism; phenylpropanoid biosynthesis. Functionally, methylates caffeoyl-CoA to feruloyl-CoA and 5-hydroxyferuloyl-CoA to sinapoyl-CoA. Plays a role in the synthesis of feruloylated polysaccharides. Involved in the reinforcement of the plant cell wall. Also involved in the responding to wounding or pathogen challenge by the increased formation of cell wall-bound ferulic acid polymers. This chain is Caffeoyl-CoA O-methyltransferase, found in Citrus natsudaidai (Natsudaidai orange).